A 271-amino-acid polypeptide reads, in one-letter code: Serine O-acetyltransferase (271 aa).

The Acyl-thioester intermediate role is filled by C112. The active-site Proton acceptor is H204. E206 is a catalytic residue.

Belongs to the MetA family.

The enzyme catalyses L-serine + acetyl-CoA = O-acetyl-L-serine + CoA. It participates in amino-acid biosynthesis; L-cysteine biosynthesis; L-cysteine from L-serine: step 1/2. In terms of biological role, catalyzes the formation of O-acetylserine (OAS) from L-serine and acetyl-CoA. To a lesser extent, is also able to use succinyl-CoA and propionyl-CoA as acyl donors, but not butyryl-CoA. Does not acylate D-serine and L-homoserine. This is Serine O-acetyltransferase from Lacticaseibacillus casei (Lactobacillus casei).